Reading from the N-terminus, the 35-residue chain is ECKKLFGGCTTSSECCAHLGCKQKWPFYCAWDWSF.

3 disulfide bridges follow: Cys-2–Cys-16, Cys-9–Cys-21, and Cys-15–Cys-29.

Belongs to the neurotoxin 10 (Hwtx-1) family. 48 (Jztx-F5) subfamily. Expressed by the venom gland.

It localises to the secreted. In terms of biological role, probable ion channel inhibitor. This Chilobrachys guangxiensis (Chinese earth tiger tarantula) protein is Jingzhaotoxin F5-21.66.